Consider the following 299-residue polypeptide: Oxygen-dependent coproporphyrinogen-III oxidase (299 aa).

Substrate is bound at residue Ser92. Residues His96 and His106 each contribute to the a divalent metal cation site. The Proton donor role is filled by His106. Position 108–110 (108–110 (NVR)) interacts with substrate. His145 and His175 together coordinate a divalent metal cation. The tract at residues 240–275 (YVEFNLVWDRGTLFGLQTGGRTESILMSMPPLVRWE) is important for dimerization. Residue 258–260 (GGR) participates in substrate binding.

This sequence belongs to the aerobic coproporphyrinogen-III oxidase family. As to quaternary structure, homodimer. A divalent metal cation serves as cofactor.

The protein localises to the cytoplasm. The enzyme catalyses coproporphyrinogen III + O2 + 2 H(+) = protoporphyrinogen IX + 2 CO2 + 2 H2O. Its pathway is porphyrin-containing compound metabolism; protoporphyrin-IX biosynthesis; protoporphyrinogen-IX from coproporphyrinogen-III (O2 route): step 1/1. In terms of biological role, involved in the heme biosynthesis. Catalyzes the aerobic oxidative decarboxylation of propionate groups of rings A and B of coproporphyrinogen-III to yield the vinyl groups in protoporphyrinogen-IX. The chain is Oxygen-dependent coproporphyrinogen-III oxidase from Salmonella typhi.